The following is a 778-amino-acid chain: Endonuclease MutS2 (778 aa).

328-335 contributes to the ATP binding site; the sequence is GPNTGGKT. Positions 702-777 constitute a Smr domain; that stretch reads LDLRGKRYEE…GSGATIVTFK (76 aa).

It belongs to the DNA mismatch repair MutS family. MutS2 subfamily. Homodimer. Binds to stalled ribosomes, contacting rRNA.

Functionally, endonuclease that is involved in the suppression of homologous recombination and thus may have a key role in the control of bacterial genetic diversity. Its function is as follows. Acts as a ribosome collision sensor, splitting the ribosome into its 2 subunits. Detects stalled/collided 70S ribosomes which it binds and splits by an ATP-hydrolysis driven conformational change. Acts upstream of the ribosome quality control system (RQC), a ribosome-associated complex that mediates the extraction of incompletely synthesized nascent chains from stalled ribosomes and their subsequent degradation. Probably generates substrates for RQC. This is Endonuclease MutS2 from Streptococcus pneumoniae (strain CGSP14).